The following is a 479-amino-acid chain: tRNA-dihydrouridine(20) synthase [NAD(P)+] (479 aa).

FMN is bound by residues 14–16 and glutamine 87; that span reads PMV. The active-site Proton donor is the cysteine 116. Residues lysine 159, histidine 187, 221 to 223, and 245 to 246 each bind FMN; these read NGD and AR.

The protein belongs to the Dus family. Dus2 subfamily. FMN serves as cofactor.

It is found in the cytoplasm. It localises to the nucleus. The catalysed reaction is 5,6-dihydrouridine(20) in tRNA + NADP(+) = uridine(20) in tRNA + NADPH + H(+). It carries out the reaction 5,6-dihydrouridine(20) in tRNA + NAD(+) = uridine(20) in tRNA + NADH + H(+). The enzyme catalyses a 5,6-dihydrouridine in mRNA + NAD(+) = a uridine in mRNA + NADH + H(+). It catalyses the reaction a 5,6-dihydrouridine in mRNA + NADP(+) = a uridine in mRNA + NADPH + H(+). Its function is as follows. Catalyzes the NADPH-dependent synthesis of dihydrouridine, a modified base found in the D-loop of most tRNAs. Specifically modifies U20 in cytoplasmic tRNAs. Also able to mediate dihydrouridylation of some mRNAs, thereby affecting their translation. This chain is tRNA-dihydrouridine(20) synthase [NAD(P)+], found in Schizosaccharomyces pombe (strain 972 / ATCC 24843) (Fission yeast).